Consider the following 235-residue polypeptide: Glucosamine-6-phosphate deaminase (235 aa).

D62 acts as the Proton acceptor; for enolization step in catalysis. N128 acts as the For ring-opening step in catalysis. The active-site Proton acceptor; for ring-opening step is the H130. E135 functions as the For ring-opening step in the catalytic mechanism.

It belongs to the glucosamine/galactosamine-6-phosphate isomerase family. NagB subfamily.

The enzyme catalyses alpha-D-glucosamine 6-phosphate + H2O = beta-D-fructose 6-phosphate + NH4(+). The protein operates within amino-sugar metabolism; N-acetylneuraminate degradation; D-fructose 6-phosphate from N-acetylneuraminate: step 5/5. Functionally, catalyzes the reversible isomerization-deamination of glucosamine 6-phosphate (GlcN6P) to form fructose 6-phosphate (Fru6P) and ammonium ion. The chain is Glucosamine-6-phosphate deaminase from Lactococcus lactis subsp. cremoris (strain SK11).